Here is a 178-residue protein sequence, read N- to C-terminus: uncharacterized protein (178 aa).

The protein localises to the mitochondrion. This is an uncharacterized protein from Paramecium tetraurelia.